Reading from the N-terminus, the 380-residue chain is Putative 8-amino-7-oxononanoate synthase (380 aa).

Substrate is bound at residue Arg22. 109 to 110 is a binding site for pyridoxal 5'-phosphate; sequence GY. Substrate is bound at residue His134. Residues Ser182, 207–210, and 238–241 each bind pyridoxal 5'-phosphate; these read DEAH and TLSK. Lys241 bears the N6-(pyridoxal phosphate)lysine mark. Thr353 is a substrate binding site.

Belongs to the class-II pyridoxal-phosphate-dependent aminotransferase family. BioF subfamily. In terms of assembly, homodimer. It depends on pyridoxal 5'-phosphate as a cofactor.

The catalysed reaction is 6-carboxyhexanoyl-[ACP] + L-alanine + H(+) = (8S)-8-amino-7-oxononanoate + holo-[ACP] + CO2. The protein operates within cofactor biosynthesis; biotin biosynthesis. Catalyzes the decarboxylative condensation of pimeloyl-[acyl-carrier protein] and L-alanine to produce 8-amino-7-oxononanoate (AON), [acyl-carrier protein], and carbon dioxide. The protein is Putative 8-amino-7-oxononanoate synthase (bioF) of Gloeothece citriformis (strain PCC 7424) (Cyanothece sp. (strain PCC 7424)).